A 504-amino-acid chain; its full sequence is 26S proteasome non-ATPase regulatory subunit 3 (504 aa).

The 180-residue stretch at 254–433 (ARYMYYQGRI…RDGPRYMQSS (180 aa)) folds into the PCI domain.

Belongs to the proteasome subunit S3 family. In terms of assembly, the 26S proteasome is composed of a core protease, known as the 20S proteasome, capped at one or both ends by the 19S regulatory complex (RC). The RC is composed of at least 18 different subunits in two subcomplexes, the base and the lid, which form the portions proximal and distal to the 20S proteolytic core, respectively.

Acts as a regulatory subunit of the 26 proteasome which is involved in the ATP-dependent degradation of ubiquitinated proteins. The sequence is that of 26S proteasome non-ATPase regulatory subunit 3 (rpn-3) from Caenorhabditis elegans.